A 104-amino-acid polypeptide reads, in one-letter code: Small ribosomal subunit protein uS10 (104 aa).

Belongs to the universal ribosomal protein uS10 family. Part of the 30S ribosomal subunit.

Functionally, involved in the binding of tRNA to the ribosomes. The chain is Small ribosomal subunit protein uS10 from Nitrosococcus oceani (strain ATCC 19707 / BCRC 17464 / JCM 30415 / NCIMB 11848 / C-107).